The following is a 410-amino-acid chain: 2-oxoisovalerate dehydrogenase subunit alpha (410 aa).

It belongs to the BCKDHA family. Heterodimer of an alpha and a beta chain. It depends on thiamine diphosphate as a cofactor.

It carries out the reaction N(6)-[(R)-lipoyl]-L-lysyl-[protein] + 3-methyl-2-oxobutanoate + H(+) = N(6)-[(R)-S(8)-2-methylpropanoyldihydrolipoyl]-L-lysyl-[protein] + CO2. Functionally, the branched-chain alpha-keto dehydrogenase complex catalyzes the overall conversion of alpha-keto acids to acyl-CoA and CO(2). It contains multiple copies of three enzymatic components: branched-chain alpha-keto acid decarboxylase (E1), lipoamide acyltransferase (E2) and lipoamide dehydrogenase (E3). The polypeptide is 2-oxoisovalerate dehydrogenase subunit alpha (bkdA1) (Pseudomonas putida (Arthrobacter siderocapsulatus)).